The primary structure comprises 542 residues: Nuclear speckle splicing regulatory protein 1 (542 aa).

Positions 21–53 (RVLQKPSVFGSDSDDDETSVSESLQREAAKKQA) are disordered. Serine 27, serine 31, and serine 33 each carry phosphoserine. Positions 103–172 (IHNLLKAVEI…RAAALEAHLD (70 aa)) form a coiled coil. Residues 105 to 169 (NLLKAVEIRK…REKRAAALEA (65 aa)) are necessary for alternative splicing activity. The tract at residues 190–516 (AVGEEAAPKS…FAKRSNEETV (327 aa)) is disordered. Glycyl lysine isopeptide (Lys-Gly) (interchain with G-Cter in SUMO2) cross-links involve residues lysine 198 and lysine 209. The segment covering 200 to 217 (SFREARTVIKEEKLRGYP) has biased composition (basic and acidic residues). Over residues 223–232 (ESRPPQQSCV) the composition is skewed to polar residues. The segment covering 239–256 (EAEENPDADREFDDESSE) has biased composition (acidic residues). 2 positions are modified to phosphoserine: serine 254 and serine 255. The segment covering 257–271 (DGEKRDHKVKSRGED) has biased composition (basic and acidic residues). Lysine 277 carries the post-translational modification N6-acetyllysine. Residues 277-288 (KHPKHHKNRAHS) are compositionally biased toward basic residues. A Glycyl lysine isopeptide (Lys-Gly) (interchain with G-Cter in SUMO2) cross-link involves residue lysine 280. 3 stretches are compositionally biased toward basic and acidic residues: residues 309–335 (RGHE…EEKS), 343–475 (SHKD…KPSH), and 485–501 (RLAE…ERPP). Residues 372-413 (KREKYSSREQERDRQRNDHDRYSEKEKKRKEKEEHTKARRER) adopt a coiled-coil conformation. Phosphoserine is present on serine 443.

This sequence belongs to the NSRP1 family. As to quaternary structure, interacts (via C-terminus) with SRSF1. Interacts (via C-terminus) with SRSF2.

It localises to the nucleus. Its subcellular location is the nucleus speckle. Functionally, RNA-binding protein that mediates pre-mRNA alternative splicing regulation. The polypeptide is Nuclear speckle splicing regulatory protein 1 (Nsrp1) (Mus musculus (Mouse)).